The following is a 267-amino-acid chain: MTVFESLMNKLTEKGALHFSLLDPDKVTMDKFIELAKGAEKAGSDALMIGGSYGVNEGTLDNYIDAVKQEVKLPIILFPGSVAGLSRRADAVLFLSVLNSTDPYYIIGAQVQAAVLMAKHYSNLESIPMAYIIVGEGGAVGFASYAKPIPFHMEDVIVAYALAAYYMGFSAIYLEAGSGAREPVPSSVVAKVKRAVRNKILMVGGGIKSPEAAYSIALAGADVIITGTVIEESPAVVLKDIVDAVHRGGLRRLSNSNENANAWVNDK.

2 residues coordinate Mg(2+): D23 and S52. Sn-glycerol 1-phosphate contacts are provided by residues 173 to 179 (YLEAGSG), 205 to 206 (GG), and 227 to 228 (GT).

This sequence belongs to the GGGP/HepGP synthase family. Group II subfamily. The cofactor is Mg(2+).

The protein resides in the cytoplasm. It catalyses the reaction sn-glycerol 1-phosphate + (2E,6E,10E)-geranylgeranyl diphosphate = sn-3-O-(geranylgeranyl)glycerol 1-phosphate + diphosphate. It participates in membrane lipid metabolism; glycerophospholipid metabolism. Functionally, prenyltransferase that catalyzes the transfer of the geranylgeranyl moiety of geranylgeranyl diphosphate (GGPP) to the C3 hydroxyl of sn-glycerol-1-phosphate (G1P). This reaction is the first ether-bond-formation step in the biosynthesis of archaeal membrane lipids. This is Geranylgeranylglyceryl phosphate synthase from Caldivirga maquilingensis (strain ATCC 700844 / DSM 13496 / JCM 10307 / IC-167).